Here is a 1153-residue protein sequence, read N- to C-terminus: PPi-type phosphoenolpyruvate carboxykinase 2 (1153 aa).

The stretch at 1085–1131 forms a coiled coil; sequence RQKLEVAKLNKDLAYLNKTIAEKPRLVETLNKQIAAVKEELQYVSSE.

Belongs to the PPi-type phosphoenolpyruvate carboxykinase family. As to quaternary structure, monomer and trimer; forms heterotrimers with PEPCK1 and PEPCK3.

Its subcellular location is the cytoplasm. The protein localises to the cytosol. It carries out the reaction oxaloacetate + diphosphate = phosphoenolpyruvate + phosphate + CO2. Inorganic pyrophosphate (PPi)-dependent phosphoenolpyruvate carboxykinase, which regulates the carbon flow of the central metabolism by fixing CO(2) to phosphoenolpyruvate to produce oxaloacetate. Can also produce pyruvate and diphosphate from phosphoenolpyruvate and phosphate. The protein is PPi-type phosphoenolpyruvate carboxykinase 2 of Entamoeba histolytica (strain ATCC 30459 / HM-1:IMSS / ABRM).